A 1729-amino-acid polypeptide reads, in one-letter code: 1,3-beta-glucan synthase component bgs1 (1729 aa).

S23 carries the post-translational modification Phosphoserine. Helical transmembrane passes span 378–398 (WTAC…AVVF), 416–436 (SMLL…FIFA), 448–468 (LVVG…YSIT), 503–523 (FVSW…SYFF), 546–566 (YILG…LLYL), and 577–597 (YLWY…CLGI). S784 and S788 each carry phosphoserine. Helical transmembrane passes span 1180–1200 (MVIM…GAMY), 1237–1257 (ILSI…CELG), 1337–1357 (MLLF…WITL), 1440–1460 (YGEI…FLFI), 1484–1504 (VAPL…GIML), 1515–1535 (YGVY…VVVF), 1550–1572 (LLGF…ICFL), and 1678–1698 (ATLY…PFVF).

This sequence belongs to the glycosyltransferase 48 family. Component of the 1,3-beta-glucan synthase (GS) complex, composed of at least the alternate catalytic subunits bgs1, bgs2, bgs3, and bgs4, and a regulatory subunit chr4.

The protein resides in the cell membrane. It localises to the cell septum. It carries out the reaction [(1-&gt;3)-beta-D-glucosyl](n) + UDP-alpha-D-glucose = [(1-&gt;3)-beta-D-glucosyl](n+1) + UDP + H(+). Its function is as follows. Alternate catalytic subunit of the 1,3-beta-glucan synthase (GS) complex. Synthesizes 1,3-beta-glucan, a major structural component of the fungal cell wall. Required for the assembly of the division septum and maintenance of cell polarity. This chain is 1,3-beta-glucan synthase component bgs1 (bgs1), found in Schizosaccharomyces pombe (strain 972 / ATCC 24843) (Fission yeast).